The following is a 226-amino-acid chain: Leucyl/phenylalanyl-tRNA--protein transferase (226 aa).

It belongs to the L/F-transferase family.

The protein localises to the cytoplasm. The catalysed reaction is N-terminal L-lysyl-[protein] + L-leucyl-tRNA(Leu) = N-terminal L-leucyl-L-lysyl-[protein] + tRNA(Leu) + H(+). The enzyme catalyses N-terminal L-arginyl-[protein] + L-leucyl-tRNA(Leu) = N-terminal L-leucyl-L-arginyl-[protein] + tRNA(Leu) + H(+). It carries out the reaction L-phenylalanyl-tRNA(Phe) + an N-terminal L-alpha-aminoacyl-[protein] = an N-terminal L-phenylalanyl-L-alpha-aminoacyl-[protein] + tRNA(Phe). In terms of biological role, functions in the N-end rule pathway of protein degradation where it conjugates Leu, Phe and, less efficiently, Met from aminoacyl-tRNAs to the N-termini of proteins containing an N-terminal arginine or lysine. The polypeptide is Leucyl/phenylalanyl-tRNA--protein transferase (Salinibacter ruber (strain DSM 13855 / M31)).